A 455-amino-acid polypeptide reads, in one-letter code: Inactive peptidyl-prolyl cis-trans isomerase shutdown (455 aa).

The disordered stretch occupies residues 34 to 54 (SQQNHARDLGLDSDSDSDYED). The segment covering 44–54 (LDSDSDSDYED) has biased composition (acidic residues). The PPIase FKBP-type domain maps to 103-192 (KARVSVRYSG…LFKVEVIDYS (90 aa)). 2 TPR repeats span residues 218-251 (AVDL…LNYC) and 303-336 (CKAL…QPAN).

It belongs to the FKBP6 family. In terms of assembly, interacts with Hsp83. Strongly expressed in the germline stem cells and in 16-cell cysts. Present in the germ cells throughout embryogenesis. Defects are due to derepression of transposable elements and impaired piRNA biogenesis.

Its subcellular location is the cytoplasm. It is found in the cytoplasmic ribonucleoprotein granule. In terms of biological role, co-chaperone required during oogenesis to repress transposable elements and prevent their mobilization, which is essential for the germline integrity. Acts via the piRNA metabolic process, which mediates the repression of transposable elements during meiosis by forming complexes composed of piRNAs and Piwi proteins and govern the methylation and subsequent repression of transposons. Acts as a co-chaperone via its interaction with Hsp83/HSP90 and is required for the biogenesis of all three piRNA major populations. This Drosophila melanogaster (Fruit fly) protein is Inactive peptidyl-prolyl cis-trans isomerase shutdown.